The primary structure comprises 523 residues: Glycerate kinase (523 aa).

The residue at position 60 (Ser-60) is a Phosphoserine.

It belongs to the glycerate kinase type-2 family. As to expression, widely expressed.

It is found in the cytoplasm. Its subcellular location is the mitochondrion. The catalysed reaction is (R)-glycerate + ATP = (2R)-3-phosphoglycerate + ADP + H(+). The polypeptide is Glycerate kinase (GLYCTK) (Homo sapiens (Human)).